Here is a 201-residue protein sequence, read N- to C-terminus: Lymphotoxin-alpha (201 aa).

The signal sequence occupies residues 1-27; it reads MTSSGVLCLLGALSLQVLLLQPPGAQG. The segment at 23-52 is disordered; that stretch reads PGAQGAPNPDNSHSSSPAPPQTAQHLSQKS. Over residues 31-51 the composition is skewed to polar residues; sequence PDNSHSSSPAPPQTAQHLSQK. The region spanning 60–201 is the THD domain; it reads PAAHLVGDPS…SSVFFGAFAL (142 aa). N-linked (GlcNAc...) asparagine glycosylation occurs at Asn93. A disulfide bond links Cys117 and Cys152.

This sequence belongs to the tumor necrosis factor family. In terms of assembly, homotrimer, and heterotrimer of either two LTB and one LTA subunits or (less prevalent) two LTA and one LTB subunits. Interacts with TNFRSF14.

The protein localises to the secreted. The protein resides in the membrane. Its function is as follows. Cytokine that in its homotrimeric form binds to TNFRSF1A/TNFR1, TNFRSF1B/TNFBR and TNFRSF14/HVEM. In its heterotrimeric form with LTB binds to TNFRSF3/LTBR. Lymphotoxin is produced by lymphocytes and is cytotoxic for a wide range of tumor cells in vitro and in vivo. The protein is Lymphotoxin-alpha (LTA) of Notamacropus eugenii (Tammar wallaby).